The sequence spans 63 residues: Cytochrome c oxidase subunit 7C, mitochondrial (63 aa).

The N-terminal 16 residues, 1-16, are a transit peptide targeting the mitochondrion; it reads MLGQSIRRFTTSVVRR. Residues 17–33 lie on the Mitochondrial matrix side of the membrane; sequence SHYEEGPGKNLPFSVEN. At Lys25 the chain carries N6-acetyllysine; alternate. Lys25 carries the post-translational modification N6-succinyllysine; alternate. The chain crosses the membrane as a helical span at residues 34–60; that stretch reads KWRLLAMMTLYFGSGFAAPFFIVRHQL. The Mitochondrial intermembrane portion of the chain corresponds to 61-63; sequence LKK.

Belongs to the cytochrome c oxidase VIIc family. In terms of assembly, component of the cytochrome c oxidase (complex IV, CIV), a multisubunit enzyme composed of 14 subunits. The complex is composed of a catalytic core of 3 subunits MT-CO1, MT-CO2 and MT-CO3, encoded in the mitochondrial DNA, and 11 supernumerary subunits COX4I, COX5A, COX5B, COX6A, COX6B, COX6C, COX7A, COX7B, COX7C, COX8 and NDUFA4, which are encoded in the nuclear genome. The complex exists as a monomer or a dimer and forms supercomplexes (SCs) in the inner mitochondrial membrane with NADH-ubiquinone oxidoreductase (complex I, CI) and ubiquinol-cytochrome c oxidoreductase (cytochrome b-c1 complex, complex III, CIII), resulting in different assemblies (supercomplex SCI(1)III(2)IV(1) and megacomplex MCI(2)III(2)IV(2)). Interacts with RAB5IF.

The protein resides in the mitochondrion inner membrane. Its pathway is energy metabolism; oxidative phosphorylation. In terms of biological role, component of the cytochrome c oxidase, the last enzyme in the mitochondrial electron transport chain which drives oxidative phosphorylation. The respiratory chain contains 3 multisubunit complexes succinate dehydrogenase (complex II, CII), ubiquinol-cytochrome c oxidoreductase (cytochrome b-c1 complex, complex III, CIII) and cytochrome c oxidase (complex IV, CIV), that cooperate to transfer electrons derived from NADH and succinate to molecular oxygen, creating an electrochemical gradient over the inner membrane that drives transmembrane transport and the ATP synthase. Cytochrome c oxidase is the component of the respiratory chain that catalyzes the reduction of oxygen to water. Electrons originating from reduced cytochrome c in the intermembrane space (IMS) are transferred via the dinuclear copper A center (CU(A)) of subunit 2 and heme A of subunit 1 to the active site in subunit 1, a binuclear center (BNC) formed by heme A3 and copper B (CU(B)). The BNC reduces molecular oxygen to 2 water molecules using 4 electrons from cytochrome c in the IMS and 4 protons from the mitochondrial matrix. This Sus scrofa (Pig) protein is Cytochrome c oxidase subunit 7C, mitochondrial (COX7C).